A 633-amino-acid chain; its full sequence is MNRLGRLSLPLRPQVCLLCQTQATMSSPLAGWQAVRSMATVRQRRQAARMVLSSNVDKSSLKQGRSKRDRAGPWSGMNQTEARLRDAPRSRSRAALKRSGDSEDDKQKPDSPLYKALKMQTALAPIPYGRRTAIKNKIAEVSSFDQFPLLPVVRHSISSQALSRTGDIVPTPIQRLAIPQLLKDPIPKRTSKDVSDHEPNFEQYLLAAETGSGKTLAYLIPLIDSLKRMEVEDKEFEKWEAEQKAKEREEKLKNRAFDIEPEEAPLSDAGRPRVIILVPTSELVAQVGAKVKALSHTVKYRSGMISSNLTPRRIKSILFNPSGIDILVATPHLLASIAKTDPYVLSRVSHLVLDEADSLMDRSFLPTTTEIIEKSASSLHKLILCSATIPRSLDNLLRKRYPDIRRLTTPNLHAIPRRVQLGVVDIQRDPYRGNRSLACADVIWSIGKAGDTEPTHPFLAQAGPKVKKILVFVNEREEADEVAQFLRSKGIDAQSFSRDSSSRKQEELLEEFTESPIPPTAEEIMLAKNKRRQDNSIPFVFPEQQNKPGAERGLPNTKVLVTTDIASRGIDTIAVKTVILYHVPHNTIDFIHRLGRLGRMGKRGRAVVLVGKKDRKDVVKEVREGMFRGQALI.

Residues 1–38 (MNRLGRLSLPLRPQVCLLCQTQATMSSPLAGWQAVRSM) constitute a mitochondrion transit peptide. The interval 50–115 (MVLSSNVDKS…KQKPDSPLYK (66 aa)) is disordered. The segment covering 52–63 (LSSNVDKSSLKQ) has biased composition (polar residues). Positions 98–109 (RSGDSEDDKQKP) are enriched in basic and acidic residues. Residues 142–175 (SSFDQFPLLPVVRHSISSQALSRTGDIVPTPIQR) carry the Q motif motif. Residues 195-407 (SDHEPNFEQY…RKRYPDIRRL (213 aa)) form the Helicase ATP-binding domain. Residue 208 to 215 (AETGSGKT) participates in ATP binding. The short motif at 354 to 357 (DEAD) is the DEAD box element. The region spanning 458–633 (FLAQAGPKVK…EGMFRGQALI (176 aa)) is the Helicase C-terminal domain.

The protein belongs to the DEAD box helicase family. MRH4 subfamily.

Its subcellular location is the mitochondrion. It catalyses the reaction ATP + H2O = ADP + phosphate + H(+). Its function is as follows. ATP-binding RNA helicase involved in mitochondrial RNA metabolism. Required for maintenance of mitochondrial DNA. This chain is ATP-dependent RNA helicase mrh4, mitochondrial (mrh4), found in Aspergillus niger (strain ATCC MYA-4892 / CBS 513.88 / FGSC A1513).